Here is a 352-residue protein sequence, read N- to C-terminus: 3-isopropylmalate dehydrogenase (352 aa).

Residues arginine 96, arginine 106, arginine 134, and aspartate 220 each contribute to the substrate site. Positions 220, 244, and 248 each coordinate Mg(2+). Position 277-289 (277-289 (GSAPDIAGKNLAN)) interacts with NAD(+).

Belongs to the isocitrate and isopropylmalate dehydrogenases family. LeuB type 1 subfamily. In terms of assembly, homodimer. It depends on Mg(2+) as a cofactor. The cofactor is Mn(2+).

The protein resides in the cytoplasm. The catalysed reaction is (2R,3S)-3-isopropylmalate + NAD(+) = 4-methyl-2-oxopentanoate + CO2 + NADH. The protein operates within amino-acid biosynthesis; L-leucine biosynthesis; L-leucine from 3-methyl-2-oxobutanoate: step 3/4. In terms of biological role, catalyzes the oxidation of 3-carboxy-2-hydroxy-4-methylpentanoate (3-isopropylmalate) to 3-carboxy-4-methyl-2-oxopentanoate. The product decarboxylates to 4-methyl-2 oxopentanoate. In Desulfitobacterium hafniense (strain Y51), this protein is 3-isopropylmalate dehydrogenase.